Reading from the N-terminus, the 70-residue chain is MGVLAAAIAIGLAALGAGIGNGLIVSRTVEGIARQPEARGMLQTTMFIGVALVEAIPIIAVVIAFMVQGR.

A run of 2 helical transmembrane segments spans residues 5-25 and 47-67; these read AAAI…GLIV and FIGV…AFMV.

The protein belongs to the ATPase C chain family. As to quaternary structure, F-type ATPases have 2 components, F(1) - the catalytic core - and F(0) - the membrane proton channel. F(1) has five subunits: alpha(3), beta(3), gamma(1), delta(1), epsilon(1). F(0) has three main subunits: a(1), b(2) and c(10-14). The alpha and beta chains form an alternating ring which encloses part of the gamma chain. F(1) is attached to F(0) by a central stalk formed by the gamma and epsilon chains, while a peripheral stalk is formed by the delta and b chains.

It localises to the cell membrane. Functionally, f(1)F(0) ATP synthase produces ATP from ADP in the presence of a proton or sodium gradient. F-type ATPases consist of two structural domains, F(1) containing the extramembraneous catalytic core and F(0) containing the membrane proton channel, linked together by a central stalk and a peripheral stalk. During catalysis, ATP synthesis in the catalytic domain of F(1) is coupled via a rotary mechanism of the central stalk subunits to proton translocation. Its function is as follows. Key component of the F(0) channel; it plays a direct role in translocation across the membrane. A homomeric c-ring of between 10-14 subunits forms the central stalk rotor element with the F(1) delta and epsilon subunits. This Anoxybacillus flavithermus (strain DSM 21510 / WK1) protein is ATP synthase subunit c.